The following is a 104-amino-acid chain: Protein SMALL AUXIN UP-REGULATED RNA 12 (104 aa).

This sequence belongs to the ARG7 family. As to expression, expressed in flowers and etiolated hypocotyls.

The protein resides in the cell membrane. Provide a mechanistic link between auxin and plasma membrane H(+)-ATPases (PM H(+)-ATPases, e.g. AHA1 and AHA2), and triggers PM H(+)-ATPases activity by promoting phosphorylation of their C-terminal autoinhibitory domain as a result of PP2C-D subfamily of type 2C phosphatases inhibition, thus leading to the acidification of the apoplast and the facilitation of solutes and water uptake to drive cell expansion. Triggers plant growth probably by promoting cell elongation. Regulates branch angles and bending. This Arabidopsis thaliana (Mouse-ear cress) protein is Protein SMALL AUXIN UP-REGULATED RNA 12.